Reading from the N-terminus, the 397-residue chain is MSPTTDRIAVVGGSISGLTAALMLRDAGVDVDVYERSPQPLSGFGTGIVVQPELVHYLLEQGVELDSISVPSSSMEYVDALTGERVGSVPADWRFTSYDSIYGGLYELFGPERYHTSKCLVGLSQDSETVQMRFSDGTKAEANWVIGADGGASVVRKRLLGIEPTYAGYVTWRGVLQPGEVADDVWNYFNDKFTYGLLDDGHLIAYPIPGRENAESPRLNFQWYWNVAEGPDLDELMTDVRGIRLPTSVHNNSLNPHNLRQFHSKGESLFKPFRDLVLNASSPFVTVVADATVDRMVHGRVLLIGDAAVTPRPHAAAGGAKACDDARTLAEVFTKNHDLRGSLQSWETRQLQQGHAYLNKVKKMASRLQHGGSFEPGNPAFAFGLPKVDEPSVVTNS.

Residues 14 to 16 (SIS), 35 to 36 (ER), valine 49, leucine 120, aspartate 306, and 316 to 320 (AAGGA) contribute to the FAD site.

As to quaternary structure, homodimer. It depends on FAD as a cofactor.

It carries out the reaction 2,6-dihydroxypyridine + NADH + O2 + H(+) = 2,3,6-trihydroxypyridine + NAD(+) + H2O. It functions in the pathway alkaloid degradation; nicotine degradation. Its function is as follows. Catalyzes the conversion of 2,6-dihydroxypyridine into 2,3,6-trihydroxypyridine in the nicotine degradation pathway. The chain is 2,6-dihydroxypyridine 3-monooxygenase (dhpH) from Paenarthrobacter nicotinovorans (Arthrobacter nicotinovorans).